A 320-amino-acid chain; its full sequence is Probable carboxylesterase M8 (320 aa).

An Involved in the stabilization of the negatively charged intermediate by the formation of the oxyanion hole motif is present at residues 52-54 (HGG). Catalysis depends on residues serine 137 and histidine 296.

Belongs to the 'GDXG' lipolytic enzyme family.

It catalyses the reaction a carboxylic ester + H2O = an alcohol + a carboxylate + H(+). Its pathway is secondary metabolite biosynthesis. Its function is as follows. Probable carboxylesterase; part of the gene cluster that mediates the biosynthesis of squalestatin S1 (SQS1, also known as zaragozic acid A), a heavily oxidized fungal polyketide that offers potent cholesterol lowering activity by targeting squalene synthase (SS). SQS1 is composed of a 2,8-dioxobicyclic[3.2.1]octane-3,4,5-tricarboxyclic acid core that is connected to two lipophilic polyketide arms. These initial steps feature the priming of an unusual benzoic acid starter unit onto the highly reducing polyketide synthase pks2, followed by oxaloacetate extension and product release to generate a tricarboxylic acid containing product. The phenylalanine ammonia lyase (PAL) M7 and the acyl-CoA ligase M9 are involved in transforming phenylalanine into benzoyl-CoA. The citrate synthase-like protein R3 is involved in connecting the C-alpha-carbons of the hexaketide chain and oxaloacetate to afford the tricarboxylic acid unit. The potential hydrolytic enzymes, M8 and M10, are in close proximity to pks2 and may participate in product release. On the other side, the tetraketide arm is synthesized by a the squalestatin tetraketide synthase pks1 and enzymatically esterified to the core in the last biosynthetic step, by the acetyltransferase M4. The biosynthesis of the tetraketide must involve 3 rounds of chain extension. After the first and second rounds methyl-transfer occurs, and in all rounds of extension the ketoreductase and dehydratase are active. The enoyl reductase and C-MeT of pks1 are not active in the final round of extension. The acetyltransferase M4 appears to have a broad substrate selectivity for its acyl CoA substrate, allowing the in vitro synthesis of novel squalestatins. The biosynthesis of SQS1 requires several oxidative steps likely performed by oxidoreductases M1, R1 and R2. Finally, in support of the identification of the cluster as being responsible for SQS1 production, the cluster contains a gene encoding a putative squalene synthase (SS) R6, suggesting a likely mechanism for self-resistance. The sequence is that of Probable carboxylesterase M8 from Phoma sp. (strain ATCC 20986 / MF5453).